Here is a 324-residue protein sequence, read N- to C-terminus: DNA repair and recombination protein RadA (324 aa).

114 to 121 (GEFGSGKT) lines the ATP pocket.

Belongs to the eukaryotic RecA-like protein family.

Involved in DNA repair and in homologous recombination. Binds and assemble on single-stranded DNA to form a nucleoprotein filament. Hydrolyzes ATP in a ssDNA-dependent manner and promotes DNA strand exchange between homologous DNA molecules. This Metallosphaera sedula (strain ATCC 51363 / DSM 5348 / JCM 9185 / NBRC 15509 / TH2) protein is DNA repair and recombination protein RadA.